The primary structure comprises 394 residues: Cystathionine gamma-lyase (394 aa).

The segment at 37–56 (KQSSPANPIGTYEYSRSQNP) is disordered. Substrate is bound by residues arginine 52, tyrosine 104, and arginine 109. Lysine 204 bears the N6-(pyridoxal phosphate)lysine mark. Glutamate 334 contacts substrate. Serine 362 is subject to Phosphoserine.

The protein belongs to the trans-sulfuration enzymes family. Homotetramer. It depends on pyridoxal 5'-phosphate as a cofactor.

The protein localises to the cytoplasm. The enzyme catalyses L,L-cystathionine + H2O = 2-oxobutanoate + L-cysteine + NH4(+). Its pathway is amino-acid biosynthesis; L-cysteine biosynthesis; L-cysteine from L-homocysteine and L-serine: step 2/2. Its function is as follows. Catalyzes the production of cysteine from cystathionine in the reverse transsulfuration pathway for the biosynthesis of sulfur-containing amino acids cysteine and methionine. In this pathway, homocysteine sulfur is converted to cysteine sulfur. Also has cystathionine beta-lyase and cystathionine gamma-synthase activities in vitro. Cystathionine beta-lyase may be physiological, while cystathionine gamma-synthase activity is not, as the required substrate O-succinyl-L-homoserine(OSH) does not occur naturally in S.cerevisiae. The protein is Cystathionine gamma-lyase of Saccharomyces cerevisiae (strain ATCC 204508 / S288c) (Baker's yeast).